The following is a 410-amino-acid chain: Protein translocase subunit SecY (410 aa).

Helical transmembrane passes span 61 to 81, 106 to 126, 135 to 155, 170 to 190, 195 to 215, 248 to 268, 289 to 309, 349 to 369, and 373 to 393; these read LSVF…IQIL, ITKY…VLRL, LYFI…VMWL, VIIF…QLFV, FLDF…IVFV, QGGV…DYVI, ILFL…YCSL, LFGS…EFVF, and VFKG…IDLI.

It belongs to the SecY/SEC61-alpha family. As to quaternary structure, component of the plastid Sec protein translocase complex, which is composed of at least SecY and SecE.

It is found in the plastid. Its subcellular location is the chloroplast thylakoid membrane. Functionally, the central subunit of the protein translocation channel SecYE. Consists of two halves formed by TMs 1-5 and 6-10. These two domains form a lateral gate at the front which open onto the bilayer between TMs 2 and 7, and are clamped together by SecE at the back. The channel is closed by both a pore ring composed of hydrophobic SecY resides and a short helix (helix 2A) on the extracellular side of the membrane which forms a plug. This Cyanidium caldarium (Red alga) protein is Protein translocase subunit SecY.